We begin with the raw amino-acid sequence, 212 residues long: Large ribosomal subunit protein uL3 (212 aa).

The interval 133 to 152 (RGSMGHGSKYHRRPGSLGAK) is disordered.

The protein belongs to the universal ribosomal protein uL3 family. As to quaternary structure, part of the 50S ribosomal subunit. Forms a cluster with proteins L14 and L19.

One of the primary rRNA binding proteins, it binds directly near the 3'-end of the 23S rRNA, where it nucleates assembly of the 50S subunit. In Syntrophomonas wolfei subsp. wolfei (strain DSM 2245B / Goettingen), this protein is Large ribosomal subunit protein uL3.